Consider the following 141-residue polypeptide: Large ribosomal subunit protein uL11 (141 aa).

It belongs to the universal ribosomal protein uL11 family. In terms of assembly, part of the ribosomal stalk of the 50S ribosomal subunit. Interacts with L10 and the large rRNA to form the base of the stalk. L10 forms an elongated spine to which L12 dimers bind in a sequential fashion forming a multimeric L10(L12)X complex. Post-translationally, one or more lysine residues are methylated.

Functionally, forms part of the ribosomal stalk which helps the ribosome interact with GTP-bound translation factors. This Prochlorococcus marinus (strain MIT 9211) protein is Large ribosomal subunit protein uL11.